Reading from the N-terminus, the 481-residue chain is Solute carrier family 46 member 2 (481 aa).

The Cytoplasmic segment spans residues 1 to 37 (MGPEAAGPGRGAAPRLQVRTWIEPVVAATQVASSLYE). Residues 38–58 (AGLLLVVKASFGAGAGAGAGA) traverse the membrane as a helical segment. Residues 59 to 83 (ASNHSAGPPRGAPEDQQQRAISNFY) are Extracellular-facing. An N-linked (GlcNAc...) asparagine glycan is attached at Asn-61. Residues 84–104 (IVYNLVVGLTPLLSAYALGWL) form a helical membrane-spanning segment. At 105–113 (SDRRHRKVA) the chain is on the cytoplasmic side. A helical membrane pass occupies residues 114-134 (ICVALLGFLLSRVGLLLKVLL). The Extracellular segment spans residues 135–143 (DWPVEVLYG). The helical transmembrane segment at 144–164 (AAALNGLCGGFSAFWAGVMAL) threads the bilayer. The Cytoplasmic segment spans residues 165–179 (GSLGSSEGRRSVRLV). Residues 180–200 (LIDLILGLAGFCGSMASGHLF) traverse the membrane as a helical segment. Residues 201–210 (KQVAGHSGQG) lie on the Extracellular side of the membrane. A helical transmembrane segment spans residues 211 to 231 (LVLTACSVSCATFALLYSLLV). Residues 232 to 286 (LKVPEAAAGSGQALSAGDSVAGTVGTYRTLDPDHSDKQSVQGLHPPSPGKAKPRR) lie on the Cytoplasmic side of the membrane. The disordered stretch occupies residues 263–282 (PDHSDKQSVQGLHPPSPGKA). Residues 287–307 (TIIALLFLGAIVYDLAVVGTV) traverse the membrane as a helical segment. Over 308–326 (DVMPLFVLREPLSWNQVQV) the chain is Extracellular. A helical transmembrane segment spans residues 327-347 (GYGMAAGYTIFITSFLGVLVF). Residues 348-353 (SRCFQD) are Cytoplasmic-facing. A helical membrane pass occupies residues 354–374 (TTMIMIGMVSFGSGALLLAFV). At 375–376 (KE) the chain is on the extracellular side. The chain crosses the membrane as a helical span at residues 377–397 (TYMFYIARAVMLFALIPITTI). Topologically, residues 398–412 (RSAMSKLIKGSSYGK) are cytoplasmic. The chain crosses the membrane as a helical span at residues 413–433 (VFVILQLSLTLTGVVTSTVYN). Topologically, residues 434–446 (KIYQVTMEKFIGT) are extracellular. The helical transmembrane segment at 447–467 (CFALSSFLSFLAIIPIGIVAY) threads the bilayer. Topologically, residues 468 to 481 (KQASWLQYGDVRET) are cytoplasmic.

Belongs to the major facilitator superfamily. SLC46A family. In terms of processing, glycosylated. Highly expressed by the epididymal duct epithelium.

Its subcellular location is the endosome membrane. It localises to the cell membrane. It carries out the reaction N-acetyl-beta-D-glucosaminyl-(1-&gt;4)-1,6-anhydro-N-acetyl-beta-D-muramoyl-L-alanyl-gamma-D-glutamyl-meso-2,6-diaminopimeloyl-D-alanine(out) + n H(+)(out) = N-acetyl-beta-D-glucosaminyl-(1-&gt;4)-1,6-anhydro-N-acetyl-beta-D-muramoyl-L-alanyl-gamma-D-glutamyl-meso-2,6-diaminopimeloyl-D-alanine(in) + n H(+)(in). It catalyses the reaction L-alanyl-gamma-D-glutamyl-meso-2,6-diaminopimelate(out) + n H(+)(out) = L-alanyl-gamma-D-glutamyl-meso-2,6-diaminopimelate(in) + n H(+)(in). The enzyme catalyses N-acetyl-D-muramoyl-L-alanyl-D-isoglutamine(out) + n H(+)(out) = N-acetyl-D-muramoyl-L-alanyl-D-isoglutamine(in) + n H(+)(in). The catalysed reaction is 2',3'-cGAMP(out) + n H(+)(out) = 2',3'-cGAMP(in) + n H(+)(in). It carries out the reaction 3',3'-cGAMP(out) + n H(+)(out) = 3',3'-cGAMP(in) + n H(+)(in). Functionally, proton-coupled transporter that delivers pathogen-associated or danger-associated molecular patterns to cytosolic pattern recognition receptors as part of the innate immune response to microbes or tissue injury. Has selectivity toward muropeptides that contain the amino acid diaminopimelic acid (DAP-type peptidoglycan muropeptides) including Tri-DAP and tracheal toxin (TCT), common in Gram-negative bacteria and Gram-positive bacilli. In the context of immune recognition of skin microbiota, shuttles bacterial muropeptides across the endolysosomal membranes into the cytosol for recognition by NOD1, triggering MYD88-dependent secretion of IL1A and neutrophil recruitment in a pyroptosis-type inflammatory process. To a lesser extent and redundantly, transports muramyl dipeptides derived from most bacterial proteoglycans, eliciting NOD2 receptor activation and downstream inflammatory responses. Postulated to function as an importer of cyclic GMP-AMP dinucleotides (cGAMPs) in monocyte and macrophage cell lineages. Selectively imports cGAMPs derived from pathogenic bacteria such as 3'3'-cGAMP thus providing for differential immune recognition of pathogenic versus commensal bacteria. During tumorigenesis may transport extracellular tumor-derived 2'3'-cGAMP across the plasma membrane of M1-polarized macrophages to activate the anti-tumoral stimulator of interferon genes (STING) pathway. The transport mechanism, its electrogenicity and stoichiometry remain to be elucidated. This is Solute carrier family 46 member 2 from Canis lupus familiaris (Dog).